The following is a 349-amino-acid chain: GTP 3',8-cyclase (349 aa).

The 226-residue stretch at 24–249 folds into the Radical SAM core domain; it reads PFGRAVTYLR…KDMSYRTGGP (226 aa). Residue Arg-33 participates in GTP binding. Residues Cys-40 and Cys-44 each coordinate [4Fe-4S] cluster. Tyr-46 contacts S-adenosyl-L-methionine. Cys-47 is a binding site for [4Fe-4S] cluster. Residue Arg-82 participates in GTP binding. Position 86 (Gly-86) interacts with S-adenosyl-L-methionine. Thr-116 contacts GTP. Ser-140 is an S-adenosyl-L-methionine binding site. Lys-176 is a GTP binding site. S-adenosyl-L-methionine is bound at residue Met-210. Cys-273 and Cys-276 together coordinate [4Fe-4S] cluster. 278–280 contacts GTP; it reads RVR. A [4Fe-4S] cluster-binding site is contributed by Cys-290.

This sequence belongs to the radical SAM superfamily. MoaA family. As to quaternary structure, monomer and homodimer. [4Fe-4S] cluster is required as a cofactor.

It catalyses the reaction GTP + AH2 + S-adenosyl-L-methionine = (8S)-3',8-cyclo-7,8-dihydroguanosine 5'-triphosphate + 5'-deoxyadenosine + L-methionine + A + H(+). It functions in the pathway cofactor biosynthesis; molybdopterin biosynthesis. Functionally, catalyzes the cyclization of GTP to (8S)-3',8-cyclo-7,8-dihydroguanosine 5'-triphosphate. The protein is GTP 3',8-cyclase of Sinorhizobium medicae (strain WSM419) (Ensifer medicae).